Reading from the N-terminus, the 285-residue chain is Dioxygenase andF (285 aa).

Fe cation contacts are provided by His-128, Asp-130, and His-205.

Belongs to the PhyH family. In terms of assembly, homodimer. It depends on Fe cation as a cofactor.

Its pathway is secondary metabolite biosynthesis; terpenoid biosynthesis. Dioxygenase; part of the gene cluster that mediates the biosynthesis of anditomin, a fungal meroterpenoid. The first step of the pathway is the synthesis of 3,5-dimethylorsellinic acid (DMOA) by the polyketide synthase andM. DMOA is then converted to the phthalide compound 5,7-dihydroxy-4,6-dimethylphthalide (DHDMP) by the cytochrome P450 monooxygenase andK, which is further prenylated by the prenyltransferase andD to yield farnesyl-DHDMP. Further epoxidation by the FAD-dependent monooxygenase andE leads to epoxyfarnesyl-DHDMP. The next step involves the terpene cyclase andB that converts epoxyfarnesyl-DHDMP into preandiloid A through opening of the epoxide ring followed by the cyclization of the farnesyl moiety. Preandiloid A is in turn oxidized at the C-3 hydroxyl group to yield preandiloid B by the dehydrogenase andC. The dioxygenase andA is solely responsible for the dehydrogenation of preandiloid B leading to the enone preandiloid C, as well as for the intriguing structural rearrangement to generate the bicyclo[2.2.2]octane core, transforming preandiloid C into andiconin. FAD-binding monooxygenase andJ then produces andilesin D which is reduced by dehydrogenase andI to yield andilesin A. Action of acetyltransferase andG followed by a spontaneous acetate elimination leads then to andilesin B, which is in turn substrate of the short chain dehydrogenase andH to yield andilesin C. Finally, the dioxygenase andF catalyzes the transformation of andilesin C to anditomin. This is Dioxygenase andF from Emericella variicolor (Aspergillus stellatus).